A 133-amino-acid polypeptide reads, in one-letter code: Otoraplin (133 aa).

A signal peptide spans 1 to 23 (MAKTFYVVVIVLCLGFIHQKAYG). Cystine bridges form between Cys35-Cys40 and Cys58-Cys132. Residues 42-115 (YAISFGRAED…PSSLVTELTV (74 aa)) enclose the SH3 domain.

Belongs to the MIA/OTOR family.

Its subcellular location is the secreted. The sequence is that of Otoraplin (OTOR) from Aquarana catesbeiana (American bullfrog).